A 180-amino-acid polypeptide reads, in one-letter code: NAD(P)H-quinone oxidoreductase subunit I, chloroplastic (180 aa).

4Fe-4S ferredoxin-type domains lie at 55–84 (GRIH…VHWR) and 95–124 (LNYS…MTEE). Positions 64, 67, 70, 74, 104, 107, 110, and 114 each coordinate [4Fe-4S] cluster.

It belongs to the complex I 23 kDa subunit family. In terms of assembly, NDH is composed of at least 16 different subunits, 5 of which are encoded in the nucleus. [4Fe-4S] cluster serves as cofactor.

The protein resides in the plastid. It localises to the chloroplast thylakoid membrane. The catalysed reaction is a plastoquinone + NADH + (n+1) H(+)(in) = a plastoquinol + NAD(+) + n H(+)(out). The enzyme catalyses a plastoquinone + NADPH + (n+1) H(+)(in) = a plastoquinol + NADP(+) + n H(+)(out). In terms of biological role, NDH shuttles electrons from NAD(P)H:plastoquinone, via FMN and iron-sulfur (Fe-S) centers, to quinones in the photosynthetic chain and possibly in a chloroplast respiratory chain. The immediate electron acceptor for the enzyme in this species is believed to be plastoquinone. Couples the redox reaction to proton translocation, and thus conserves the redox energy in a proton gradient. The sequence is that of NAD(P)H-quinone oxidoreductase subunit I, chloroplastic from Calycanthus floridus var. glaucus (Eastern sweetshrub).